Consider the following 162-residue polypeptide: Peroxiredoxin-2C (162 aa).

One can recognise a Thioredoxin domain in the interval 4–162 (VAVGDTLPDG…SGAEEILKAL (159 aa)). The active-site Cysteine sulfenic acid (-SOH) intermediate is C51.

The protein belongs to the peroxiredoxin family. Prx5 subfamily. As to quaternary structure, monomer.

It is found in the cytoplasm. The catalysed reaction is [glutaredoxin]-dithiol + a hydroperoxide = [glutaredoxin]-disulfide + an alcohol + H2O. Reduces hydrogen peroxide and alkyl hydroperoxides with reducing equivalents provided through the thioredoxin or glutaredoxin system. May be involved in intracellular redox signaling. Its function is as follows. Thiol-specific peroxidase that catalyzes the reduction of hydrogen peroxide and organic hydroperoxides to water and alcohols, respectively. Plays a role in cell protection against oxidative stress by detoxifying peroxides. This chain is Peroxiredoxin-2C (PRXIIC), found in Oryza sativa subsp. japonica (Rice).